The following is a 173-amino-acid chain: Urease accessory protein UreE (173 aa).

Residues 136–173 (PEGGAYAGSGQDHHDHSHGEHTQGEHTHDEAAEPHHHG) are disordered. The segment covering 146 to 173 (QDHHDHSHGEHTQGEHTHDEAAEPHHHG) has biased composition (basic and acidic residues).

It belongs to the UreE family.

The protein resides in the cytoplasm. Its function is as follows. Involved in urease metallocenter assembly. Binds nickel. Probably functions as a nickel donor during metallocenter assembly. This is Urease accessory protein UreE from Beijerinckia indica subsp. indica (strain ATCC 9039 / DSM 1715 / NCIMB 8712).